The sequence spans 223 residues: Receptor-transporting protein 2 (223 aa).

Topologically, residues 1–193 (MSTSLTTCEW…KKGQAGFISS (193 aa)) are cytoplasmic. The segment at 52–161 (ASGRFHCSWC…SEFCEACQEG (110 aa)) adopts a 3CxxC-type zinc-finger fold. Residues 194-216 (FFSFRWCLFWGTLCLVIVYLQFF) form a helical membrane-spanning segment. The Extracellular portion of the chain corresponds to 217–223 (RGRSGFL).

The protein belongs to the TMEM7 family. Interacts with olfactory receptors. Predominantly expressed in olfactory and vomeronasal organs, in mature olfactory sensory neurons.

Its subcellular location is the cell membrane. Functionally, specifically promotes functional cell surface expression of olfactory receptors, but not of other GPCRs. The chain is Receptor-transporting protein 2 (Rtp2) from Mus musculus (Mouse).